A 235-amino-acid chain; its full sequence is Protein shisa-5 (235 aa).

The N-terminal stretch at 1–26 (MAAPAPSLWTLLLLLLLLPPPPGAHG) is a signal peptide. Residues 27-105 (ELCRPFGEDN…SSFDSDPMSG (79 aa)) lie on the Extracellular side of the membrane. A helical membrane pass occupies residues 106 to 126 (FGATVAIGVTIFVVFIATIII). At 127-235 (CFTCSCCCLY…TYMDSLKTIP (109 aa)) the chain is on the cytoplasmic side. The segment at 157–235 (APYPQPQPQP…TYMDSLKTIP (79 aa)) is disordered. 2 stretches are compositionally biased toward pro residues: residues 159–172 (YPQPQPQPVAPSYP) and 181–211 (PMPPQPGMPAAPYPTQYPPPYLAQPTGPPPY).

It belongs to the shisa family. As to quaternary structure, interacts with PDCD6; PDCD6 can stabilize SHISA5. Spleen and thymus.

Its subcellular location is the endoplasmic reticulum membrane. It is found in the nucleus membrane. In terms of biological role, can induce apoptosis in a caspase-dependent manner and plays a role in p53/TP53-dependent apoptosis. The polypeptide is Protein shisa-5 (Shisa5) (Mus musculus (Mouse)).